Reading from the N-terminus, the 476-residue chain is Protein transport protein Sec61 subunit alpha-like 1 (476 aa).

The Cytoplasmic portion of the chain corresponds to 2–33; the sequence is AIKFLEVIKPFCAVLPEIQKPERKIQFREKVL. Residues 34 to 53 form a helical membrane-spanning segment; that stretch reads WTAITLFIFLVCCQIPLFGI. The Lumenal portion of the chain corresponds to 54–76; sequence MSSDSADPFYWMRVILASNRGTL. Residues 77 to 96 form a helical membrane-spanning segment; it reads MELGISPIVTSGLIMQLLAG. At 97 to 117 the chain is on the cytoplasmic side; the sequence is AKIIEVGDTPKDRALFNGAQK. A helical transmembrane segment spans residues 118-138; it reads LFGMIITIGQAIVYVMTGMYG. The Lumenal portion of the chain corresponds to 139–144; that stretch reads DPSEMG. A helical transmembrane segment spans residues 145-165; sequence AGICLLIIIQLFVAGLIVLLL. Topologically, residues 166 to 172 are cytoplasmic; it reads DELLQKG. The helical transmembrane segment at 173-193 threads the bilayer; the sequence is YGLGSGISLFIATNICETIVW. Residues 194-240 lie on the Lumenal side of the membrane; the sequence is KAFSPTTVNTGRGTEFEGAIIALFHLLATRTDKVRALREAFYRQNLP. The helical transmembrane segment at 241–261 threads the bilayer; the sequence is NLMNLIATVFVFAVVIYFQGF. Residues 262–288 lie on the Cytoplasmic side of the membrane; the sequence is RVDLPIKSARYRGQYNTYPIKLFYTSN. The helical transmembrane segment at 289-309 threads the bilayer; sequence IPIILQSALVSNLYVISQMLS. Residues 310–354 lie on the Lumenal side of the membrane; sequence TRFSGNFLVNLLGTWSDTSSGGPARAYPVGGLCYYLSPPESFGSV. A helical transmembrane segment spans residues 355–375; sequence LDDPVHAVIYIVFMLGSCAFF. The Cytoplasmic portion of the chain corresponds to 376–420; that stretch reads SKTWIEVSGSSAKDVAKQLKEQQMVMRGHRETSMVHELNRYIPTA. A helical membrane pass occupies residues 421–441; sequence AAFGGLCIGGLSVMADFLGAI. The Lumenal portion of the chain corresponds to 442 to 445; that stretch reads GSGT. Residues 446–462 traverse the membrane as a helical segment; the sequence is GILLAVTIIYQYFEIFV. Over 463 to 476 the chain is Cytoplasmic; sequence KEQSEVGSMGALLF.

Belongs to the SecY/SEC61-alpha family. The SEC61 channel-forming translocon complex consists of channel-forming core components SEC61A1, SEC61B and SEC61G and different auxiliary components such as SEC62 and SEC63. The SEC61 channel associates with the multi-pass translocon (MPT) complex.

The protein resides in the endoplasmic reticulum membrane. Its function is as follows. Component of SEC61 channel-forming translocon complex that mediates transport of signal peptide-containing precursor polypeptides across the endoplasmic reticulum (ER). Forms a ribosome receptor and a gated pore in the ER membrane, both functions required for cotranslational translocation of nascent polypeptides. May cooperate with auxiliary protein SEC62, SEC63 and HSPA5/BiP to enable post-translational transport of small presecretory proteins. The SEC61 channel is also involved in ER membrane insertion of transmembrane proteins: it mediates membrane insertion of the first few transmembrane segments of proteins, while insertion of subsequent transmembrane regions of multi-pass membrane proteins is mediated by the multi-pass translocon (MPT) complex. Plays a role in the pronephric kidney tubule development. The chain is Protein transport protein Sec61 subunit alpha-like 1 (sec61al1) from Danio rerio (Zebrafish).